The following is a 295-amino-acid chain: Light-independent protochlorophyllide reductase iron-sulfur ATP-binding protein (295 aa).

ATP is bound by residues 39 to 44 and Lys-68; that span reads GIGKST. Ser-43 is a binding site for Mg(2+). Residues Cys-124 and Cys-158 each coordinate [4Fe-4S] cluster. Residue 209–210 coordinates ATP; the sequence is NR.

Belongs to the NifH/BchL/ChlL family. Homodimer. Protochlorophyllide reductase is composed of three subunits; ChlL, ChlN and ChlB. Requires [4Fe-4S] cluster as cofactor.

The catalysed reaction is chlorophyllide a + oxidized 2[4Fe-4S]-[ferredoxin] + 2 ADP + 2 phosphate = protochlorophyllide a + reduced 2[4Fe-4S]-[ferredoxin] + 2 ATP + 2 H2O. It functions in the pathway porphyrin-containing compound metabolism; chlorophyll biosynthesis (light-independent). In terms of biological role, component of the dark-operative protochlorophyllide reductase (DPOR) that uses Mg-ATP and reduced ferredoxin to reduce ring D of protochlorophyllide (Pchlide) to form chlorophyllide a (Chlide). This reaction is light-independent. The L component serves as a unique electron donor to the NB-component of the complex, and binds Mg-ATP. The chain is Light-independent protochlorophyllide reductase iron-sulfur ATP-binding protein from Prochlorococcus marinus (strain MIT 9312).